The chain runs to 124 residues: MSYQDPQHPVSAPPPQGYPPKEGYPPAGYPPPAGYPPPQYPQAGYPPAGYPPPQQGYGQGYPAQGYPPPQYPQGHPPQYPYQGPPPPHYGQAPPKNKKDKKDSGGFMEGCLAMLCCCVLLEACF.

The tract at residues 1–103 (MSYQDPQHPV…PKNKKDKKDS (103 aa)) is disordered. Pro residues-rich tracts occupy residues 27–40 (AGYP…PPQY) and 65–88 (GYPP…PPPH). Residues 101–118 (KDSGGFMEGCLAMLCCCV) traverse the membrane as a helical segment.

Belongs to the CYSTM1 family. In terms of assembly, heterodimers. Interacts with CYSTM7 and WIH1/CYSTM13. In terms of tissue distribution, mostly expressed in stems and,at low levels, in stems, roots, flowers, siliques and leaves.

It localises to the cell membrane. The protein resides in the cytoplasm. In terms of biological role, involved in resistance to abiotic stress. This chain is Protein CYSTEINE-RICH TRANSMEMBRANE MODULE 10, found in Arabidopsis thaliana (Mouse-ear cress).